A 226-amino-acid polypeptide reads, in one-letter code: Cytidylate kinase (226 aa).

12-20 serves as a coordination point for ATP; it reads GPSGAGKGT.

It belongs to the cytidylate kinase family. Type 1 subfamily.

The protein resides in the cytoplasm. It catalyses the reaction CMP + ATP = CDP + ADP. It carries out the reaction dCMP + ATP = dCDP + ADP. This is Cytidylate kinase from Vibrio parahaemolyticus serotype O3:K6 (strain RIMD 2210633).